We begin with the raw amino-acid sequence, 229 residues long: Heptaprenylglyceryl phosphate synthase (229 aa).

Lys12 is a binding site for sn-glycerol 1-phosphate. Mg(2+) contacts are provided by Asp14 and Ser40. Sn-glycerol 1-phosphate contacts are provided by residues 159–164, Gly189, and 209–210; these read YLEYSG and GN.

This sequence belongs to the GGGP/HepGP synthase family. Group I subfamily. Homodimer. The cofactor is Mg(2+).

It catalyses the reaction sn-glycerol 1-phosphate + all-trans-heptaprenyl diphosphate = 3-heptaprenyl-sn-glycero-1-phosphate + diphosphate. The protein operates within membrane lipid metabolism; glycerophospholipid metabolism. In terms of biological role, prenyltransferase that catalyzes in vivo the transfer of the heptaprenyl moiety of heptaprenyl pyrophosphate (HepPP; 35 carbon atoms) to the C3 hydroxyl of sn-glycerol-1-phosphate (G1P), producing heptaprenylglyceryl phosphate (HepGP). This reaction is an ether-bond-formation step in the biosynthesis of archaea-type G1P-based membrane lipids found in Bacillales. In Bacillus cereus (strain B4264), this protein is Heptaprenylglyceryl phosphate synthase.